The primary structure comprises 201 residues: ATP-dependent Clp protease proteolytic subunit (201 aa).

Ser-101 serves as the catalytic Nucleophile. His-126 is a catalytic residue.

This sequence belongs to the peptidase S14 family. In terms of assembly, component of the chloroplastic Clp protease core complex.

It localises to the plastid. Its subcellular location is the chloroplast stroma. It carries out the reaction Hydrolysis of proteins to small peptides in the presence of ATP and magnesium. alpha-casein is the usual test substrate. In the absence of ATP, only oligopeptides shorter than five residues are hydrolyzed (such as succinyl-Leu-Tyr-|-NHMec, and Leu-Tyr-Leu-|-Tyr-Trp, in which cleavage of the -Tyr-|-Leu- and -Tyr-|-Trp bonds also occurs).. Cleaves peptides in various proteins in a process that requires ATP hydrolysis. Has a chymotrypsin-like activity. Plays a major role in the degradation of misfolded proteins. The polypeptide is ATP-dependent Clp protease proteolytic subunit (Staurastrum punctulatum (Green alga)).